The sequence spans 984 residues: Putative formate dehydrogenase SAB2186c (984 aa).

The region spanning 3–79 is the 2Fe-2S ferredoxin-type domain; the sequence is EHLVVTLDGK…PMTVNTVNND (77 aa). Cys37, Cys48, Cys51, and Cys63 together coordinate [2Fe-2S] cluster. Residues 79-119 form the 4Fe-4S His(Cys)3-ligated-type domain; that stretch reads DVKDAQKEALDRILEKHMLYCTVCDYNNGDCEIHNTMDAWG. [4Fe-4S] cluster-binding residues include His95, Cys99, Cys102, Cys109, Cys147, Cys150, Cys153, Cys157, Cys190, Cys193, Cys196, Cys200, Cys264, Cys267, Cys271, and Cys299. 2 4Fe-4S ferredoxin-type domains span residues 138 to 165 and 181 to 211; these read PFYRYDPNQCILCGRCVEACQDIEVNET and NDVPINESSCVSCGQCATVCPCNAMMEVNME. Residues 252 to 984 are formate dehydrogenase; sequence MRKERIKKTK…YVFPGNQVDK (733 aa). Residues 257–313 enclose the 4Fe-4S Mo/W bis-MGD-type domain; the sequence is IKKTKTVCTYCGVGCSFEVWTKDREILKVQPSHDSPANKIATCVKGKFSWGHINSDQ.

This sequence in the C-terminal section; belongs to the prokaryotic molybdopterin-containing oxidoreductase family. The cofactor is [2Fe-2S] cluster. [4Fe-4S] cluster is required as a cofactor. It depends on Mo-bis(molybdopterin guanine dinucleotide) as a cofactor.

The enzyme catalyses formate + NAD(+) = CO2 + NADH. The chain is Putative formate dehydrogenase SAB2186c from Staphylococcus aureus (strain bovine RF122 / ET3-1).